A 392-amino-acid chain; its full sequence is MSFLTLKDVDLKNKKVLVRVDFNVPVKDGKVTSKVRIEAAIPTIQYILDQGGAVILMSHLGRPTEGEYDSQFSLEPVAEVLSQIIKKPVRFAKDWLNGVDAKAGEIVMCDNVRFNKGEKKSDDELSKKIASLGDVFVMDAFATAHRAQASTYGVAKYVPVACAGLLLANEIKALEKALKAPKKPMAAIVGGSKVSTKLSVLHNLLDKVEILIVGGGIANTFIKAEGFNIGNSLYEEDLVGEAKDILAKAKELGVNIPVPVDVRVAKELSENAVAVVKNVADVADDEMILDIGPKSERNIAELLKSANTILWNGPVGVFEFDNFAEGTKALSLAIAESDAFSVAGGGDTIAAIEKFDIKDKVSYISTAGGAFLEFLEGKKLPAVEILKEKATI.

Substrate is bound by residues 21-23 (DFN), Arg-36, 59-62 (HLGR), Arg-113, and Arg-146. ATP is bound by residues Lys-197, Glu-319, and 345-348 (GGDT).

It belongs to the phosphoglycerate kinase family. In terms of assembly, monomer.

It is found in the cytoplasm. The enzyme catalyses (2R)-3-phosphoglycerate + ATP = (2R)-3-phospho-glyceroyl phosphate + ADP. Its pathway is carbohydrate degradation; glycolysis; pyruvate from D-glyceraldehyde 3-phosphate: step 2/5. This Francisella philomiragia subsp. philomiragia (strain ATCC 25017 / CCUG 19701 / FSC 153 / O#319-036) protein is Phosphoglycerate kinase.